The sequence spans 104 residues: Photosystem II reaction center Psb28 protein (104 aa).

The protein belongs to the Psb28 family. As to quaternary structure, part of the photosystem II complex.

It localises to the cellular thylakoid membrane. The chain is Photosystem II reaction center Psb28 protein from Synechococcus sp. (strain JA-3-3Ab) (Cyanobacteria bacterium Yellowstone A-Prime).